The primary structure comprises 233 residues: 7-cyano-7-deazaguanine synthase (233 aa).

ATP is bound at residue 7–17 (CSGGLDSVSLA). Residues Cys-185, Cys-193, Cys-196, and Cys-199 each coordinate Zn(2+).

Belongs to the QueC family. The cofactor is Zn(2+).

It catalyses the reaction 7-carboxy-7-deazaguanine + NH4(+) + ATP = 7-cyano-7-deazaguanine + ADP + phosphate + H2O + H(+). It participates in purine metabolism; 7-cyano-7-deazaguanine biosynthesis. Its function is as follows. Catalyzes the ATP-dependent conversion of 7-carboxy-7-deazaguanine (CDG) to 7-cyano-7-deazaguanine (preQ(0)). In Paracoccus denitrificans (strain Pd 1222), this protein is 7-cyano-7-deazaguanine synthase.